Here is a 739-residue protein sequence, read N- to C-terminus: Phosphoribosylformylglycinamidine synthase subunit PurL (739 aa).

The active site involves His54. ATP is bound by residues Tyr57 and Lys96. Glu98 is a binding site for Mg(2+). Substrate contacts are provided by residues 99–102 (SHNH) and Arg121. The Proton acceptor role is filled by His100. Position 122 (Asp122) interacts with Mg(2+). Substrate is bound at residue Gln245. Asp273 serves as a coordination point for Mg(2+). 317 to 319 (ESQ) contacts substrate. 2 residues coordinate ATP: Asp500 and Gly537. Asn538 provides a ligand contact to Mg(2+). Substrate is bound at residue Ser540.

This sequence belongs to the FGAMS family. Monomer. Part of the FGAM synthase complex composed of 1 PurL, 1 PurQ and 2 PurS subunits.

The protein localises to the cytoplasm. It carries out the reaction N(2)-formyl-N(1)-(5-phospho-beta-D-ribosyl)glycinamide + L-glutamine + ATP + H2O = 2-formamido-N(1)-(5-O-phospho-beta-D-ribosyl)acetamidine + L-glutamate + ADP + phosphate + H(+). It participates in purine metabolism; IMP biosynthesis via de novo pathway; 5-amino-1-(5-phospho-D-ribosyl)imidazole from N(2)-formyl-N(1)-(5-phospho-D-ribosyl)glycinamide: step 1/2. Its function is as follows. Part of the phosphoribosylformylglycinamidine synthase complex involved in the purines biosynthetic pathway. Catalyzes the ATP-dependent conversion of formylglycinamide ribonucleotide (FGAR) and glutamine to yield formylglycinamidine ribonucleotide (FGAM) and glutamate. The FGAM synthase complex is composed of three subunits. PurQ produces an ammonia molecule by converting glutamine to glutamate. PurL transfers the ammonia molecule to FGAR to form FGAM in an ATP-dependent manner. PurS interacts with PurQ and PurL and is thought to assist in the transfer of the ammonia molecule from PurQ to PurL. This chain is Phosphoribosylformylglycinamidine synthase subunit PurL, found in Bacillus cereus (strain G9842).